The primary structure comprises 463 residues: NADH dehydrogenase [ubiquinone] iron-sulfur protein 2, mitochondrial (463 aa).

The N-terminal 33 residues, M1–G33, are a transit peptide targeting the mitochondrion. K62 is subject to N6-acetyllysine. R118 bears the Symmetric dimethylarginine mark. 3 residues coordinate [4Fe-4S] cluster: C326, C332, and C347.

Belongs to the complex I 49 kDa subunit family. In terms of assembly, core subunit of respiratory chain NADH dehydrogenase (Complex I) which is composed of 45 different subunits. Component of the iron-sulfur (IP) fragment of the enzyme. Interacts with NDUFAF3. Interacts with NDUFAF7. Interacts with CERS2. It depends on [4Fe-4S] cluster as a cofactor. Post-translationally, dimethylation at Arg-118 by NDUFAF7 takes place after NDUFS2 assembles into the complex I, leading to stabilize the early intermediate complex.

The protein resides in the mitochondrion inner membrane. It catalyses the reaction a ubiquinone + NADH + 5 H(+)(in) = a ubiquinol + NAD(+) + 4 H(+)(out). In terms of biological role, core subunit of the mitochondrial membrane respiratory chain NADH dehydrogenase (Complex I) which catalyzes electron transfer from NADH through the respiratory chain, using ubiquinone as an electron acceptor. Essential for the catalytic activity and assembly of complex I. Redox-sensitive, critical component of the oxygen-sensing pathway in the pulmonary vasculature which plays a key role in acute pulmonary oxygen-sensing and hypoxic pulmonary vasoconstriction. Plays an important role in carotid body sensing of hypoxia. Essential for glia-like neural stem and progenitor cell proliferation, differentiation and subsequent oligodendrocyte or neuronal maturation. The sequence is that of NADH dehydrogenase [ubiquinone] iron-sulfur protein 2, mitochondrial (NDUFS2) from Pan troglodytes (Chimpanzee).